We begin with the raw amino-acid sequence, 190 residues long: Inosine triphosphate pyrophosphatase (190 aa).

10–15 contributes to the ITP binding site; it reads TGNAKK. Residue Glu-40 participates in Mg(2+) binding. ITP-binding positions include Lys-52, 68-69, Lys-85, 144-147, Lys-167, and 172-173; these read DT, FGWD, and HR.

Belongs to the HAM1 NTPase family. Homodimer. Requires Mg(2+) as cofactor. It depends on Mn(2+) as a cofactor.

The protein localises to the cytoplasm. The enzyme catalyses ITP + H2O = IMP + diphosphate + H(+). It carries out the reaction dITP + H2O = dIMP + diphosphate + H(+). The catalysed reaction is XTP + H2O = XMP + diphosphate + H(+). Pyrophosphatase that hydrolyzes non-canonical purine nucleotides such as inosine triphosphate (ITP), deoxyinosine triphosphate (dITP) or xanthosine 5'-triphosphate (XTP) to their respective monophosphate derivatives. The enzyme does not distinguish between the deoxy- and ribose forms. Probably excludes non-canonical purines from RNA and DNA precursor pools, thus preventing their incorporation into RNA and DNA and avoiding chromosomal lesions. This is Inosine triphosphate pyrophosphatase from Culex quinquefasciatus (Southern house mosquito).